Reading from the N-terminus, the 312-residue chain is Porphobilinogen deaminase (312 aa).

C241 is subject to S-(dipyrrolylmethanemethyl)cysteine.

The protein belongs to the HMBS family. Monomer. The cofactor is dipyrromethane.

The catalysed reaction is 4 porphobilinogen + H2O = hydroxymethylbilane + 4 NH4(+). It participates in porphyrin-containing compound metabolism; protoporphyrin-IX biosynthesis; coproporphyrinogen-III from 5-aminolevulinate: step 2/4. Its function is as follows. Tetrapolymerization of the monopyrrole PBG into the hydroxymethylbilane pre-uroporphyrinogen in several discrete steps. This chain is Porphobilinogen deaminase, found in Pelotomaculum thermopropionicum (strain DSM 13744 / JCM 10971 / SI).